We begin with the raw amino-acid sequence, 482 residues long: tRNA sulfurtransferase (482 aa).

The region spanning 61–165 is the THUMP domain; it reads DVTLAVLTQT…NDKLNLIIAR (105 aa). ATP-binding positions include 183 to 184, lysine 265, glycine 287, and glutamine 296; that span reads LI. Cysteine 344 and cysteine 456 are disulfide-bonded. The Rhodanese domain occupies 404–482; sequence LGSDVVVLDI…GYKNVKVYRP (79 aa). Residue cysteine 456 is the Cysteine persulfide intermediate of the active site.

The protein belongs to the ThiI family.

The protein localises to the cytoplasm. It catalyses the reaction [ThiI sulfur-carrier protein]-S-sulfanyl-L-cysteine + a uridine in tRNA + 2 reduced [2Fe-2S]-[ferredoxin] + ATP + H(+) = [ThiI sulfur-carrier protein]-L-cysteine + a 4-thiouridine in tRNA + 2 oxidized [2Fe-2S]-[ferredoxin] + AMP + diphosphate. It carries out the reaction [ThiS sulfur-carrier protein]-C-terminal Gly-Gly-AMP + S-sulfanyl-L-cysteinyl-[cysteine desulfurase] + AH2 = [ThiS sulfur-carrier protein]-C-terminal-Gly-aminoethanethioate + L-cysteinyl-[cysteine desulfurase] + A + AMP + 2 H(+). Its pathway is cofactor biosynthesis; thiamine diphosphate biosynthesis. Functionally, catalyzes the ATP-dependent transfer of a sulfur to tRNA to produce 4-thiouridine in position 8 of tRNAs, which functions as a near-UV photosensor. Also catalyzes the transfer of sulfur to the sulfur carrier protein ThiS, forming ThiS-thiocarboxylate. This is a step in the synthesis of thiazole, in the thiamine biosynthesis pathway. The sulfur is donated as persulfide by IscS. This is tRNA sulfurtransferase from Aliivibrio fischeri (strain ATCC 700601 / ES114) (Vibrio fischeri).